We begin with the raw amino-acid sequence, 348 residues long: Phosphoribosylformylglycinamidine cyclo-ligase (348 aa).

The protein belongs to the AIR synthase family.

It localises to the cytoplasm. It carries out the reaction 2-formamido-N(1)-(5-O-phospho-beta-D-ribosyl)acetamidine + ATP = 5-amino-1-(5-phospho-beta-D-ribosyl)imidazole + ADP + phosphate + H(+). Its pathway is purine metabolism; IMP biosynthesis via de novo pathway; 5-amino-1-(5-phospho-D-ribosyl)imidazole from N(2)-formyl-N(1)-(5-phospho-D-ribosyl)glycinamide: step 2/2. The protein is Phosphoribosylformylglycinamidine cyclo-ligase of Ruegeria sp. (strain TM1040) (Silicibacter sp.).